We begin with the raw amino-acid sequence, 2968 residues long: Trinucleotide repeat-containing gene 18 protein (2968 aa).

Disordered stretches follow at residues 1–24 (MDGR…SGLA) and 139–261 (GSPL…LAER). Over residues 139 to 150 (GSPLLSQLGQPS) the composition is skewed to low complexity. Basic and acidic residues-rich tracts occupy residues 221 to 233 (GKKD…EEAS) and 243 to 260 (QEAR…RLAE). S263 carries the phosphoserine modification. Over residues 304-322 (GAKEAARQDEGARLLRRTE) the composition is skewed to basic and acidic residues. Disordered regions lie at residues 304-356 (GAKE…PAGV) and 381-488 (FDER…PAAQ). The span at 327-351 (GPRPCPSPLPPPPAPPKGPPAPPAA) shows a compositional bias: pro residues. Basic and acidic residues-rich tracts occupy residues 395–405 (RDARAREREAG), 419–431 (PLDR…EKNS), and 464–479 (ELLK…ERAP). A Phosphoserine modification is found at S611. 8 disordered regions span residues 612 to 679 (PFGG…EVRH), 941 to 1002 (EHRA…SPVA), 1019 to 1055 (PAYA…PENV), 1106 to 1190 (DADG…MATP), 1212 to 1236 (SCAE…PGRT), 1279 to 1306 (LAQV…GQCP), 1497 to 1566 (KQRE…SDDY), and 1687 to 1855 (SLKS…RERA). K620 participates in a covalent cross-link: Glycyl lysine isopeptide (Lys-Gly) (interchain with G-Cter in SUMO2). Composition is skewed to basic and acidic residues over residues 651 to 660 (LKRDPERPES) and 941 to 955 (EHRA…KRGL). Residues 916–949 (LQQQAAQALELQRSAQLVQERLKAQEHRAEMEEK) are a coiled coil. 2 stretches are compositionally biased toward low complexity: residues 966–983 (AGPG…AGPA) and 1019–1031 (PAYA…SSHP). A compositionally biased stretch (pro residues) spans 1032 to 1043 (TSPPPASPPPTP). Residues 1046–1055 (TRKEEAPENV) are compositionally biased toward basic and acidic residues. S1127 and S1136 each carry phosphoserine. Basic and acidic residues predominate over residues 1142 to 1162 (EPLREGPEEEPLAEREVKAEV). Pro residues predominate over residues 1171-1181 (ELPPLESPLPL). Residues 1481–1516 (LDFRMRLAEVQRQYKEKQRELVKLQRRRDSEDRREE) are a coiled coil. A compositionally biased stretch (basic and acidic residues) spans 1497–1519 (KQRELVKLQRRRDSEDRREEPHR). The span at 1520–1534 (SLARRGPGRPRKRTH) shows a compositional bias: basic residues. At S1540 the chain carries Phosphoserine. The segment covering 1549–1563 (GHSSGKLSSKSLLTS) has biased composition (low complexity). Over residues 1816–1842 (SSEESFDQDESSEEEDEEEELEEEDEA) the composition is skewed to acidic residues. S1857 and S1863 each carry phosphoserine. 2 disordered regions span residues 1912 to 2148 (YTDS…LTPA) and 2295 to 2771 (LLVP…RLPS). 2 stretches are compositionally biased toward basic and acidic residues: residues 1957–1968 (SPDKAKLAVEKG) and 1993–2004 (LWTRRRSERIFL). Over residues 2007–2024 (ASAAAPAPVSTAPATKTS) the composition is skewed to low complexity. A compositionally biased stretch (basic and acidic residues) spans 2034–2046 (PRKDAGRAKDRKD). Residues 2069–2085 (ALPSEARAPHASSLTAA) show a composition bias toward low complexity. Residues 2093–2103 (KGKEVKKENRG) show a composition bias toward basic and acidic residues. Residue T2146 is modified to Phosphothreonine. Positions 2307–2316 (TSKDTGEGKD) are enriched in basic and acidic residues. Residues 2329–2338 (ARGRGRKPSA) are compositionally biased toward basic residues. The span at 2365 to 2374 (EPSSTPGSKK) shows a compositional bias: low complexity. Residues 2375–2384 (SPPEPVDKRA) are compositionally biased toward basic and acidic residues. Residues 2390–2401 (RPAPPQPSPAPP) show a composition bias toward pro residues. Low complexity predominate over residues 2411–2433 (PFAELPAPATSLAPAPLITMPAT). Composition is skewed to basic and acidic residues over residues 2441–2468 (RAAE…DHEG) and 2477–2487 (AKEALLLREDP). 2 stretches are compositionally biased toward low complexity: residues 2559–2580 (SSSS…SGSE) and 2603–2671 (SAAS…SSSS). Positions 2673-2685 (TDEDSSCSSDDEA) are enriched in acidic residues. Pro residues predominate over residues 2723–2736 (APQPQAPPPQPTQP). S2771 is modified (phosphoserine). The BAH domain occupies 2817–2962 (EMIRIGDCAV…PTTGMIFSTD (146 aa)).

The protein is Trinucleotide repeat-containing gene 18 protein of Homo sapiens (Human).